Consider the following 856-residue polypeptide: MDNAAIASQSNTPPSNGRSSARFVTPISVHSSPITAEVIEPSSPFSPPSPSTLLTSLSKSPSHKISNLQMDGAKTTCLEVLQNSSLVVDSPKRQDKSITGSKAKPASTMRHGQRTASHKMATQTEIQTVDGDRLIVSPKTRKKKAATAKRTRKQDGVAERRLHGHVSKVKSPGDLKLDAKIPPSKPCDNKAPSVGDNTDNELERQTGGLQLEKATKRRLDWTPTKEGPIPMVDLAEVHSSSCGKSVIRTHSAGTLLSNYGFSGVVNTSLAPMPETCDNGPTTKRLMELQNFYSASGIQTPTESRPATNDSQSISSKQQRVKVKKPQKAKLTTLTSYVTAKYSVVDQTADLDRIETVNSGKNKKMGVTKRTSGTERANAARGKSDTLKNGNGPPVFKVVPPLEAFKSFDGQELLFGTSSQLEHGHSEDQDEEIQHTADSINKSNVVPRPAVSKGLGSSLFRLSSSKNLWSASSRDLTGAVLQVDEIDLSERSIEVSTPAAKYKRKTGIRDLSGQNVIDVEKDTRTLAANIDTRELDNMNEPSLAEDDLVYRENLESTNAKLNSQTPANISEAMLERPLPDKPIFGGFTTSELAKQVAAYGFKPIKSRDKMISLLEKCWENQSKSSKLEPKPNQRNHKSQGDDLAERQLLGLKPRSDSISFVNTRSPKKRLAKTSVKSQESKSFSLSNEGPRITSKLPMKRFVSPCAILIDDDQSSDSVGEALPLSPSHSSNGNGTLHHPQDCDEIHAPTTQMAIRSAKSSISVSSTTNLPSLSSQITKAVQSQPRIRAFKGLKQPTWYEKILMYDPIQLEDLAAWLNTGGFGLIGEDREVGAGVVREWCESKGICCVWKKQASAKSH.

Residues 1–19 (MDNAAIASQSNTPPSNGRS) show a composition bias toward polar residues. Disordered regions lie at residues 1–24 (MDNA…ARFV), 39–61 (IEPS…SKSP), 88–121 (VDSP…HKMA), 139–201 (KTRK…TDNE), 296–326 (GIQT…KKPQ), 362–392 (KKMG…GNGP), 621–640 (SKSS…SQGD), 653–688 (RSDS…SNEG), and 715–742 (DSVG…QDCD). Residues 51–60 (STLLTSLSKS) show a composition bias toward low complexity. A compositionally biased stretch (basic residues) spans 139-152 (KTRKKKAATAKRTR). The segment covering 296-309 (GIQTPTESRPATND) has biased composition (polar residues). Positions 673–686 (SVKSQESKSFSLSN) are enriched in polar residues.

Belongs to the SLX4 family. In terms of assembly, forms a heterodimer with SLX1. Phosphorylated in response to DNA damage.

It localises to the nucleus. Its function is as follows. Regulatory subunit of the SLX1-SLX4 structure-specific endonuclease that resolves DNA secondary structures generated during DNA repair and recombination. Has endonuclease activity towards branched DNA substrates, introducing single-strand cuts in duplex DNA close to junctions with ss-DNA. This Ajellomyces dermatitidis (strain ER-3 / ATCC MYA-2586) (Blastomyces dermatitidis) protein is Structure-specific endonuclease subunit SLX4.